A 238-amino-acid chain; its full sequence is Single-stranded DNA-binding protein WHY2, mitochondrial (238 aa).

The transit peptide at 1 to 29 directs the protein to the mitochondrion; it reads MMKQARSLLSRSLCDQSKSLFEASTLRGF. Residues 62–67 are required for ssDNA binding; it reads KGKAAL.

Belongs to the Whirly family. In terms of assembly, homotetramer.

It is found in the mitochondrion. In terms of biological role, single-stranded DNA-binding protein that associates with mitochondrial DNA and may play a role in the regulation of the gene expression machinery. Also seems to be required to prevent break-induced DNA rearrangements in the mitochondrial genome. Can bind to melt double-stranded DNA in vivo. The chain is Single-stranded DNA-binding protein WHY2, mitochondrial (WHY2) from Arabidopsis thaliana (Mouse-ear cress).